The primary structure comprises 419 residues: Gamma-glutamyl phosphate reductase (419 aa).

Belongs to the gamma-glutamyl phosphate reductase family.

The protein localises to the cytoplasm. The catalysed reaction is L-glutamate 5-semialdehyde + phosphate + NADP(+) = L-glutamyl 5-phosphate + NADPH + H(+). It participates in amino-acid biosynthesis; L-proline biosynthesis; L-glutamate 5-semialdehyde from L-glutamate: step 2/2. Catalyzes the NADPH-dependent reduction of L-glutamate 5-phosphate into L-glutamate 5-semialdehyde and phosphate. The product spontaneously undergoes cyclization to form 1-pyrroline-5-carboxylate. This Maridesulfovibrio salexigens (strain ATCC 14822 / DSM 2638 / NCIMB 8403 / VKM B-1763) (Desulfovibrio salexigens) protein is Gamma-glutamyl phosphate reductase.